We begin with the raw amino-acid sequence, 413 residues long: Tyrosine--tRNA ligase (413 aa).

Y34 contributes to the L-tyrosine binding site. The short motif at 39-48 (PTSHSLTVGH) is the 'HIGH' region element. Residues Y164 and Q168 each coordinate L-tyrosine. The short motif at 225–229 (KFGKS) is the 'KMSKS' region element. K228 is an ATP binding site. Positions 347–413 (ILLVDALVQT…GKKNNALIVF (67 aa)) constitute an S4 RNA-binding domain.

This sequence belongs to the class-I aminoacyl-tRNA synthetase family. TyrS type 1 subfamily. Homodimer.

The protein resides in the cytoplasm. It catalyses the reaction tRNA(Tyr) + L-tyrosine + ATP = L-tyrosyl-tRNA(Tyr) + AMP + diphosphate + H(+). Its function is as follows. Catalyzes the attachment of tyrosine to tRNA(Tyr) in a two-step reaction: tyrosine is first activated by ATP to form Tyr-AMP and then transferred to the acceptor end of tRNA(Tyr). The polypeptide is Tyrosine--tRNA ligase (Onion yellows phytoplasma (strain OY-M)).